The sequence spans 329 residues: tRNA pseudouridine synthase B (329 aa).

Asp-42 (nucleophile) is an active-site residue.

The protein belongs to the pseudouridine synthase TruB family. Type 1 subfamily.

The enzyme catalyses uridine(55) in tRNA = pseudouridine(55) in tRNA. Functionally, responsible for synthesis of pseudouridine from uracil-55 in the psi GC loop of transfer RNAs. This Lactococcus lactis subsp. lactis (strain IL1403) (Streptococcus lactis) protein is tRNA pseudouridine synthase B.